An 838-amino-acid chain; its full sequence is Protein translocase subunit SecA (838 aa).

ATP is bound by residues Gln-86, 104-108 (GEGKT), and Asp-493. Disordered stretches follow at residues 517–536 (RRID…PGSS) and 789–838 (KVAE…CCGQ). Over residues 801–819 (TDGDSKAKRQPVRKKETVG) the composition is skewed to basic and acidic residues. Zn(2+) is bound by residues Cys-824, Cys-826, Cys-835, and Cys-836.

This sequence belongs to the SecA family. Monomer and homodimer. Part of the essential Sec protein translocation apparatus which comprises SecA, SecYEG and auxiliary proteins SecDF. Other proteins may also be involved. It depends on Zn(2+) as a cofactor.

Its subcellular location is the cell membrane. The protein localises to the cytoplasm. The enzyme catalyses ATP + H2O + cellular proteinSide 1 = ADP + phosphate + cellular proteinSide 2.. Functionally, part of the Sec protein translocase complex. Interacts with the SecYEG preprotein conducting channel. Has a central role in coupling the hydrolysis of ATP to the transfer of proteins into and across the cell membrane, serving as an ATP-driven molecular motor driving the stepwise translocation of polypeptide chains across the membrane. The sequence is that of Protein translocase subunit SecA from Halalkalibacterium halodurans (strain ATCC BAA-125 / DSM 18197 / FERM 7344 / JCM 9153 / C-125) (Bacillus halodurans).